The sequence spans 494 residues: Adenosylhomocysteinase (494 aa).

Residues T72, D155, and E217 each coordinate substrate. 218-220 (TTT) contributes to the NAD(+) binding site. Positions 247 and 251 each coordinate substrate. Residues N252, 281–286 (GYGDVG), E304, N339, 360–362 (IGH), and N408 each bind NAD(+).

The protein belongs to the adenosylhomocysteinase family. NAD(+) serves as cofactor.

It is found in the cytoplasm. It catalyses the reaction S-adenosyl-L-homocysteine + H2O = L-homocysteine + adenosine. It functions in the pathway amino-acid biosynthesis; L-homocysteine biosynthesis; L-homocysteine from S-adenosyl-L-homocysteine: step 1/1. Functionally, may play a key role in the regulation of the intracellular concentration of adenosylhomocysteine. This is Adenosylhomocysteinase from Nocardia farcinica (strain IFM 10152).